We begin with the raw amino-acid sequence, 105 residues long: Small ribosomal subunit protein uS10 (105 aa).

Belongs to the universal ribosomal protein uS10 family. As to quaternary structure, part of the 30S ribosomal subunit.

In terms of biological role, involved in the binding of tRNA to the ribosomes. The polypeptide is Small ribosomal subunit protein uS10 (Francisella tularensis subsp. mediasiatica (strain FSC147)).